The following is a 585-amino-acid chain: Arginine--tRNA ligase (585 aa).

Residues 127-137 carry the 'HIGH' region motif; sequence PNTNKPLHVGH.

Belongs to the class-I aminoacyl-tRNA synthetase family. As to quaternary structure, monomer.

It is found in the cytoplasm. The enzyme catalyses tRNA(Arg) + L-arginine + ATP = L-arginyl-tRNA(Arg) + AMP + diphosphate. This chain is Arginine--tRNA ligase, found in Borrelia garinii subsp. bavariensis (strain ATCC BAA-2496 / DSM 23469 / PBi) (Borreliella bavariensis).